Consider the following 166-residue polypeptide: Transcriptional repressor NrdR (166 aa).

The segment at 3–34 (CPFCGHDDTQVKDSRSTEDGVAIRRRRVCSAC) is a zinc-finger region. The region spanning 49–139 (LSVTKADGRR…VYRDFREVEA (91 aa)) is the ATP-cone domain. The segment at 146–166 (DMKPIPGETDTPSPDDSQETP) is disordered.

It belongs to the NrdR family. Zn(2+) serves as cofactor.

In terms of biological role, negatively regulates transcription of bacterial ribonucleotide reductase nrd genes and operons by binding to NrdR-boxes. This Gluconobacter oxydans (strain 621H) (Gluconobacter suboxydans) protein is Transcriptional repressor NrdR.